A 131-amino-acid polypeptide reads, in one-letter code: Profilin-2 (131 aa).

Cys13 and Cys115 are oxidised to a cystine. The Involved in PIP2 interaction motif lies at 81–97 (AVIRGKKGAGGITIKKT). Thr111 is subject to Phosphothreonine.

Belongs to the profilin family. In terms of assembly, occurs in many kinds of cells as a complex with monomeric actin in a 1:1 ratio. Post-translationally, phosphorylated by MAP kinases.

Its subcellular location is the cytoplasm. It localises to the cytoskeleton. Binds to actin and affects the structure of the cytoskeleton. At high concentrations, profilin prevents the polymerization of actin, whereas it enhances it at low concentrations. By binding to PIP2, it inhibits the formation of IP3 and DG. The chain is Profilin-2 (PRO2) from Phleum pratense (Common timothy).